The primary structure comprises 196 residues: Ribosome maturation factor RimP (196 aa).

Positions 131–145 are enriched in basic residues; sequence KKKAGKKSQGKKAGK. Residues 131–153 are disordered; that stretch reads KKKAGKKSQGKKAGKKTPQAPVQ.

Belongs to the RimP family.

The protein localises to the cytoplasm. In terms of biological role, required for maturation of 30S ribosomal subunits. The chain is Ribosome maturation factor RimP from Corynebacterium urealyticum (strain ATCC 43042 / DSM 7109).